The following is a 291-amino-acid chain: N-acetylmannosamine kinase (291 aa).

ATP contacts are provided by residues 5 to 12 (AIDIGGTK) and 132 to 139 (GVGGGVVC). The Zn(2+) site is built by H156, C166, C168, and C173.

This sequence belongs to the ROK (NagC/XylR) family. NanK subfamily. Homodimer.

The enzyme catalyses an N-acyl-D-mannosamine + ATP = an N-acyl-D-mannosamine 6-phosphate + ADP + H(+). Its pathway is amino-sugar metabolism; N-acetylneuraminate degradation; D-fructose 6-phosphate from N-acetylneuraminate: step 2/5. In terms of biological role, catalyzes the phosphorylation of N-acetylmannosamine (ManNAc) to ManNAc-6-P. The polypeptide is N-acetylmannosamine kinase (Salmonella gallinarum (strain 287/91 / NCTC 13346)).